The primary structure comprises 355 residues: UPF0421 protein BCE_2776 (355 aa).

Helical transmembrane passes span 19–39 (IAVFLTVLVCEFFNIPTIFAV), 74–94 (FTFFLGHQALSYALAAMFTIV), 109–129 (TLTAVAMIPITADHYFTAFLI), and 131–151 (LATTSTGIIVSTLVNFFILPP).

It belongs to the UPF0421 family.

Its subcellular location is the cell membrane. The polypeptide is UPF0421 protein BCE_2776 (Bacillus cereus (strain ATCC 10987 / NRS 248)).